A 509-amino-acid polypeptide reads, in one-letter code: ATP synthase subunit alpha (509 aa).

169-176 (GDRQTGKT) is an ATP binding site.

Belongs to the ATPase alpha/beta chains family. In terms of assembly, F-type ATPases have 2 components, CF(1) - the catalytic core - and CF(0) - the membrane proton channel. CF(1) has five subunits: alpha(3), beta(3), gamma(1), delta(1), epsilon(1). CF(0) has three main subunits: a(1), b(2) and c(9-12). The alpha and beta chains form an alternating ring which encloses part of the gamma chain. CF(1) is attached to CF(0) by a central stalk formed by the gamma and epsilon chains, while a peripheral stalk is formed by the delta and b chains.

The protein resides in the cell inner membrane. It catalyses the reaction ATP + H2O + 4 H(+)(in) = ADP + phosphate + 5 H(+)(out). Functionally, produces ATP from ADP in the presence of a proton gradient across the membrane. The alpha chain is a regulatory subunit. The protein is ATP synthase subunit alpha of Brucella suis biovar 1 (strain 1330).